Consider the following 452-residue polypeptide: MHQRALLFSALLTAVRAQQAGTLTEEVHPSLTWQKCTSEGSCTEQSGSVVIDSNWRWTHSVNDSTNCYTGNTWDATLCPDDETCATNCALDGADYESTYGVTTDGDSLTLKFVTGSNVGSRLYLMDTSDEGYQTFNLLDAEFTFDVDVSNLPCGLNGALYFTAMDADGGASKYPANKAGAKYGTGYCDSQCPRDLKFIDGQANVDGWEPSSNNDNTGIGNHGSCCPEMDIWEANKISTALTPHPCDSSEQTMCEGNDCGGTYSDDRYGGTCDPDGCDFNPYRMGNDSFYGPGKTIDTGSKMTVVTQFITDGSGSLSEIKRYYVQNGNVIANADSNISGVTGNSITTDFCTAQKKAFGDDDIFAEHNGLAGISDAMSSMVLILSLWDDYYASMEWLDSDYPENATATDPGVARGTCDSESGVPATVEGAHPDSSVTFSNIKFGPINSTFSASA.

Positions 1–17 are cleaved as a signal peptide; sequence MHQRALLFSALLTAVRA. Asn62 carries N-linked (GlcNAc...) asparagine glycosylation. Catalysis depends on Glu227, which acts as the Nucleophile. The Proton donor role is filled by Glu232. 4 N-linked (GlcNAc...) asparagine glycosylation sites follow: Asn285, Asn335, Asn402, and Asn445.

This sequence belongs to the glycosyl hydrolase 7 (cellulase C) family.

It localises to the secreted. The enzyme catalyses Hydrolysis of (1-&gt;4)-beta-D-glucosidic linkages in cellulose and cellotetraose, releasing cellobiose from the non-reducing ends of the chains.. In terms of biological role, the biological conversion of cellulose to glucose generally requires three types of hydrolytic enzymes: (1) Endoglucanases which cut internal beta-1,4-glucosidic bonds; (2) Exocellobiohydrolases that cut the disaccharide cellobiose from the non-reducing end of the cellulose polymer chain; (3) Beta-1,4-glucosidases which hydrolyze the cellobiose and other short cello-oligosaccharides to glucose. This is Probable 1,4-beta-D-glucan cellobiohydrolase A (cbhA) from Aspergillus niger (strain ATCC MYA-4892 / CBS 513.88 / FGSC A1513).